A 584-amino-acid polypeptide reads, in one-letter code: Ubiquitin-like-specific protease 1D (584 aa).

Disordered stretches follow at residues D28–L64 and D99–E323. The segment covering D99 to S120 has biased composition (basic and acidic residues). Positions K121–V132 are enriched in low complexity. Composition is skewed to basic and acidic residues over residues D142–S165 and P176–E196. Basic residues predominate over residues R197–V207. The segment covering G221–M253 has biased composition (basic and acidic residues). Positions I261–D274 are enriched in acidic residues. The segment covering T275–W286 has biased composition (basic and acidic residues). Active-site residues include H438, D461, and C525.

It belongs to the peptidase C48 family.

It is found in the nucleus speckle. Its function is as follows. Protease that catalyzes two essential functions in the SUMO pathway: processing of full-length SUMOs to their mature forms and deconjugation of SUMO from targeted proteins. Cleaves precursors of SUM1 and SUM2, but not of SUM3 or SUM5. Able to release SUM1 and SUM2 from conjugates, but unable to cleave SUM3. Protease activity mainly directed at deconjugating SUM1 and SUM2 from their target proteins. Regulates salt stress responses and flowering time. Redundant with ULP1C. The polypeptide is Ubiquitin-like-specific protease 1D (ULP1D) (Arabidopsis thaliana (Mouse-ear cress)).